A 486-amino-acid polypeptide reads, in one-letter code: MSGTEKKLGFLASGYGLSPKEKDYPVLGFAVDSRKVAKGFVFGAFPGAKVNGEDFIEKAIAAGAVAIVARPEVKIEGAVHLVAENPRLAFAEMAARFYAPFPPVMAAVTGTNGKTSVAELCRQLWTITGHKAASIGTLGVITAKNSYSLGMTTPDVVTFLSCCSDLARADISHVIFEASSHGLDQYRSDGAKVIAGAFTSFSRDHLDYHGTMERYLAAKLRLFDERIAPDGTAVIWADDPAATTVIAHVQKRGLKLIDIGEKAEAIRLVNREADSQGQMITLSIKGESYKIRLPLIGGYQLSNALVAAGLVLATGGDIKQTMAALTLLKPVRGRLERATQSQNGAEVYVDYAHTPDGLRAAIEALRPHTEGLLWVVFGAGGDRDKGKRPEMGKIAANLADHVIVTDDNPRGEDAATIRKEVLVGAPLAEEIGGRKEAIFSAIKRAEKGDIVLIAGKGHEQGQIIGRGETMRVLPFDDVTVAKEAVL.

Serine 33 contacts UDP-N-acetyl-alpha-D-muramoyl-L-alanyl-D-glutamate. 110–116 is a binding site for ATP; that stretch reads GTNGKTS. UDP-N-acetyl-alpha-D-muramoyl-L-alanyl-D-glutamate contacts are provided by residues 152–153, serine 179, glutamine 185, and arginine 187; that span reads TT. Lysine 219 bears the N6-carboxylysine mark. Meso-2,6-diaminopimelate is bound by residues arginine 383, 407–410, glycine 455, and glutamate 459; that span reads DNPR. The short motif at 407–410 is the Meso-diaminopimelate recognition motif element; it reads DNPR.

This sequence belongs to the MurCDEF family. MurE subfamily. Requires Mg(2+) as cofactor. Carboxylation is probably crucial for Mg(2+) binding and, consequently, for the gamma-phosphate positioning of ATP.

The protein localises to the cytoplasm. It catalyses the reaction UDP-N-acetyl-alpha-D-muramoyl-L-alanyl-D-glutamate + meso-2,6-diaminopimelate + ATP = UDP-N-acetyl-alpha-D-muramoyl-L-alanyl-gamma-D-glutamyl-meso-2,6-diaminopimelate + ADP + phosphate + H(+). The protein operates within cell wall biogenesis; peptidoglycan biosynthesis. Its function is as follows. Catalyzes the addition of meso-diaminopimelic acid to the nucleotide precursor UDP-N-acetylmuramoyl-L-alanyl-D-glutamate (UMAG) in the biosynthesis of bacterial cell-wall peptidoglycan. This is UDP-N-acetylmuramoyl-L-alanyl-D-glutamate--2,6-diaminopimelate ligase from Zymomonas mobilis subsp. mobilis (strain ATCC 31821 / ZM4 / CP4).